We begin with the raw amino-acid sequence, 615 residues long: 1-deoxy-D-xylulose-5-phosphate synthase (615 aa).

Thiamine diphosphate is bound by residues H76 and 117 to 119 (GHS). D148 lines the Mg(2+) pocket. Residues 149–150 (GA), N177, Y284, and E365 contribute to the thiamine diphosphate site. N177 contacts Mg(2+).

This sequence belongs to the transketolase family. DXPS subfamily. In terms of assembly, homodimer. Mg(2+) is required as a cofactor. The cofactor is thiamine diphosphate.

It catalyses the reaction D-glyceraldehyde 3-phosphate + pyruvate + H(+) = 1-deoxy-D-xylulose 5-phosphate + CO2. It participates in metabolic intermediate biosynthesis; 1-deoxy-D-xylulose 5-phosphate biosynthesis; 1-deoxy-D-xylulose 5-phosphate from D-glyceraldehyde 3-phosphate and pyruvate: step 1/1. Its function is as follows. Catalyzes the acyloin condensation reaction between C atoms 2 and 3 of pyruvate and glyceraldehyde 3-phosphate to yield 1-deoxy-D-xylulose-5-phosphate (DXP). This is 1-deoxy-D-xylulose-5-phosphate synthase from Francisella tularensis subsp. mediasiatica (strain FSC147).